Here is a 505-residue protein sequence, read N- to C-terminus: Poxin-Schlafen (505 aa).

The segment at 1–238 (MAMFYAHAFG…SKEERVDYVL (238 aa)) is poxin-like. H17 (proton donor) is an active-site residue. Y138 serves as the catalytic Shared with catalytic histidine of dimeric partner. K142 functions as the Proton acceptor; shared with catalytic histidine of dimeric partner in the catalytic mechanism. Residues 239–505 (MKRLESIRHL…PDEWVSHIKF (267 aa)) form a schlafen-like region.

The protein in the N-terminal section; belongs to the poxin family. This sequence in the C-terminal section; belongs to the Schlafen protein family. Subgroup poxviridae B3 subfamily. In terms of assembly, homodimer.

It catalyses the reaction 2',3'-cGAMP + H2O = Gp(2'-5')Ap(3') + H(+). Nuclease that is responsible for viral evasion of host cGAS-STING innate immunity. Cleaves 2',3'-cGAMP which is produced by host cGAS following recognition of cytosolic DNA and blocks the subsequent 2',3'-cGAMP-mediated activation of TMEM173/STING, which normally spreads to adjacent cells and activates the interferon and NF-kappa-B immune responses. The polypeptide is Poxin-Schlafen (OPG188) (Bos taurus (Bovine)).